The sequence spans 66 residues: Ocellatin-PT3 (66 aa).

The N-terminal stretch at 1 to 22 (MAFLKKSLFLVLFLGLVSLSIC) is a signal peptide. A propeptide spanning residues 23-39 (DEEKRQDEDDDDDDDEE) is cleaved from the precursor. V66 bears the Valine amide mark.

In terms of tissue distribution, expressed by the skin glands.

It is found in the secreted. Its function is as follows. Has antibacterial activity against Gram-negative bacterium E.coli ATCC 25922 (MIC=320 uM) but not against S.pneumoniae ATCC 700603, S.choleraesuis ATCC 14028 or Gram-positive bacterium S.aureus ATCC 29313. Shows no hemolytic activity and no cytotoxicity. In Leptodactylus pustulatus (Ceara white-lipped frog), this protein is Ocellatin-PT3.